We begin with the raw amino-acid sequence, 764 residues long: Myotubularin-related protein 10-B (764 aa).

Residues phenylalanine 208 to tyrosine 649 form the Myotubularin phosphatase domain.

It belongs to the protein-tyrosine phosphatase family. Non-receptor class myotubularin subfamily.

The polypeptide is Myotubularin-related protein 10-B (mtmr10-b) (Xenopus laevis (African clawed frog)).